The sequence spans 359 residues: Aromatic amino acid aminotransferase (359 aa).

A disordered region spans residues 1-42; the sequence is MSERKPPYLRSALDSIPPYRPGRKVVGPDGRSAKLSSNESPF. Lysine 223 carries the N6-(pyridoxal phosphate)lysine modification.

This sequence belongs to the class-II pyridoxal-phosphate-dependent aminotransferase family. Homodimer. Requires pyridoxal 5'-phosphate as cofactor.

The enzyme catalyses an aromatic L-alpha-amino acid + 2-oxoglutarate = an aromatic oxo-acid + L-glutamate. Aminotransferase that catalyzes the conversion of aromatic amino acids and 2-oxoglutarate into corresponding aromatic oxo acids and L-glutamate. The sequence is that of Aromatic amino acid aminotransferase from Thermobifida fusca (strain YX).